Reading from the N-terminus, the 326-residue chain is GMP reductase (326 aa).

C175 serves as the catalytic Thioimidate intermediate. 204 to 227 (IIADGGIRTHGDIAKSVRFGATMV) serves as a coordination point for NADP(+).

It belongs to the IMPDH/GMPR family. GuaC type 2 subfamily.

The enzyme catalyses IMP + NH4(+) + NADP(+) = GMP + NADPH + 2 H(+). Catalyzes the irreversible NADPH-dependent deamination of GMP to IMP. It functions in the conversion of nucleobase, nucleoside and nucleotide derivatives of G to A nucleotides, and in maintaining the intracellular balance of A and G nucleotides. The sequence is that of GMP reductase from Bacillus licheniformis (strain ATCC 14580 / DSM 13 / JCM 2505 / CCUG 7422 / NBRC 12200 / NCIMB 9375 / NCTC 10341 / NRRL NRS-1264 / Gibson 46).